The chain runs to 111 residues: Ribosome-binding factor A (111 aa).

The protein belongs to the RbfA family. Monomer. Binds 30S ribosomal subunits, but not 50S ribosomal subunits or 70S ribosomes.

It is found in the cytoplasm. Functionally, one of several proteins that assist in the late maturation steps of the functional core of the 30S ribosomal subunit. Associates with free 30S ribosomal subunits (but not with 30S subunits that are part of 70S ribosomes or polysomes). Required for efficient processing of 16S rRNA. May interact with the 5'-terminal helix region of 16S rRNA. This Helicobacter pylori (strain HPAG1) protein is Ribosome-binding factor A.